Consider the following 366-residue polypeptide: Galactoside alpha-(1,2)-fucosyltransferase 1 (366 aa).

The Cytoplasmic segment spans residues 1–8 (MWPLSHRH). The chain crosses the membrane as a helical; Signal-anchor for type II membrane protein span at residues 9–25 (LCLAFLLVCVLSAISFF). Residues 26–366 (LHIHQDSIRH…LSPLWTLAEP (341 aa)) lie on the Lumenal side of the membrane. 3 N-linked (GlcNAc...) asparagine glycosylation sites follow: Asn66, Asn302, and Asn328.

Belongs to the glycosyltransferase 11 family.

It is found in the golgi apparatus. Its subcellular location is the golgi stack membrane. It catalyses the reaction a beta-D-galactosyl-(1-&gt;4)-N-acetyl-beta-D-glucosaminyl derivative + GDP-beta-L-fucose = an alpha-L-Fuc-(1-&gt;2)-beta-D-Gal-(1-&gt;4)-beta-D-GlcNAc derivative + GDP + H(+). The enzyme catalyses a ganglioside GA1 + GDP-beta-L-fucose = a ganglioside Fuc-GA1 + GDP + H(+). The catalysed reaction is a beta-D-Gal-(1-&gt;3)-beta-D-GlcNAc-(1-&gt;3)-beta-D-Gal-(1-&gt;4)-beta-D-Glc-(1&lt;-&gt;1')-Cer(d18:1(4E)) + GDP-beta-L-fucose = alpha-L-fucosyl-(1-&gt;2)- beta-D-galactosyl-(1-&gt;3)-N-acetyl-beta-D-glucosaminyl-(1-&gt;3)-beta-D-galactosyl-(1-&gt;4)-beta-D-glucosyl-(1&lt;-&gt;1')-N-acylsphing-4-enine + GDP + H(+). It carries out the reaction a neolactoside nLc4Cer(d18:1(4E)) + GDP-beta-L-fucose = a neolactoside IV(2)-alpha-Fuc-nLc4Cer(d18:1(4E)) + GDP + H(+). It catalyses the reaction a ganglioside GM1 + GDP-beta-L-fucose = a ganglioside Fuc-GM1 + GDP + H(+). The enzyme catalyses beta-D-galactosyl-(1-&gt;3)-N-acetyl-D-galactosamine + GDP-beta-L-fucose = alpha-L-fucosyl-(1-&gt;2)-beta-D-galactosyl-(1-&gt;3)-N-acetyl-D-galactosamine + GDP + H(+). It participates in protein modification; protein glycosylation. Catalyzes the transfer of L-fucose, from a guanosine diphosphate-beta-L-fucose, to the terminal galactose residue of glycoconjugates through an alpha(1,2) linkage leading to H antigen synthesis that is an intermediate substrate in the synthesis of ABO blood group antigens. H antigen is essential for maturation of the glomerular layer of the main olfactory bulb, in cell migration and early cell-cell contacts during tumor associated angiogenesis. Preferentially fucosylates soluble lactose and to a lesser extent fucosylates glycolipids gangliosides GA1 and GM1a. The protein is Galactoside alpha-(1,2)-fucosyltransferase 1 of Aotus azarae (Azara's night monkey).